Reading from the N-terminus, the 580-residue chain is Jasmonoyl--L-amino acid synthetase JAR6 (580 aa).

Residue Ser100 coordinates ATP. Ser103 provides a ligand contact to jasmonate. Residues Met120, Thr123, Gly164, Asn169, and 332–337 each bind ATP; that span reads GSSEGW. 167–171 contacts an L-alpha-amino acid; it reads TTNVY. 329–332 contacts jasmonate; that stretch reads ADYG. An an L-alpha-amino acid-binding site is contributed by 534 to 538; the sequence is KILDH.

The protein belongs to the IAA-amido conjugating enzyme family.

The catalysed reaction is a jasmonate + an L-alpha-amino acid + ATP = a jasmonyl-L-amino acid + AMP + diphosphate + H(+). Functionally, catalyzes the synthesis of jasmonate-amino acid conjugates by adenylation. Catalyzes the conjugation of jasmonate (JA) to Ile, Leu and Val. Catalyzes the conjugation of JA to Ile that may mediate defense signaling and resistance to the herbivore Manduca sexta caterpillars. The polypeptide is Jasmonoyl--L-amino acid synthetase JAR6 (JAR6) (Nicotiana attenuata (Coyote tobacco)).